A 969-amino-acid polypeptide reads, in one-letter code: UvrABC system protein A (969 aa).

Residue 32 to 39 (GLSGSGKS) participates in ATP binding. The C4-type zinc-finger motif lies at 258 to 286 (CPNGHPLAVDDLEPRSFSFNSPYGACPEC). 2 consecutive ABC transporter domains span residues 316 to 599 (WSAG…KDSI) and 619 to 948 (VDRK…KFLA). 652 to 659 (GVSGSGKS) contributes to the ATP binding site. Residues 751–777 (CEACTGDGTIKIEMNFLPDVYVPCEVC) form a C4-type zinc finger.

The protein belongs to the ABC transporter superfamily. UvrA family. As to quaternary structure, forms a heterotetramer with UvrB during the search for lesions.

It localises to the cytoplasm. Its function is as follows. The UvrABC repair system catalyzes the recognition and processing of DNA lesions. UvrA is an ATPase and a DNA-binding protein. A damage recognition complex composed of 2 UvrA and 2 UvrB subunits scans DNA for abnormalities. When the presence of a lesion has been verified by UvrB, the UvrA molecules dissociate. The sequence is that of UvrABC system protein A from Mycobacterium leprae (strain TN).